A 198-amino-acid polypeptide reads, in one-letter code: MRLFYAVFLPEEVRAALVEAQTKVRPFRGWKPVPPHQLHLTLLFLGERPEEELPDYLALGHRLARLEAPFRARLRGTGYFPNEGTPRVWFAKAEAEGFLRLAEGLRAGVEELLGEEAVRIPGWDKPFKPHITLARRKAPAPRVPPVLFGLEWPVEGFALVRSELKPKGPVYTVLEKFSLRGEHGREQAQGPGERPEGD.

His-39 acts as the Proton donor in catalysis. 2 consecutive short sequence motifs (HXTX) follow at residues 39-42 (HLTL) and 130-133 (HITL). Catalysis depends on His-130, which acts as the Proton acceptor.

This sequence belongs to the 2H phosphoesterase superfamily. ThpR family.

It catalyses the reaction a 3'-end 2',3'-cyclophospho-ribonucleotide-RNA + H2O = a 3'-end 2'-phospho-ribonucleotide-RNA + H(+). Its function is as follows. Hydrolyzes RNA 2',3'-cyclic phosphodiester to an RNA 2'-phosphomonoester. This chain is RNA 2',3'-cyclic phosphodiesterase, found in Thermus thermophilus (strain ATCC 27634 / DSM 579 / HB8).